The following is a 639-amino-acid chain: MLDPLYPLFPIFAFLGFVLAILPLPWHLQAWNSGTCFFMMWTALGCLNQFINSVAWADDAMNKAPVWCEISIRILMGASVGIPASSLCIIRRLYYIAKVRAVSKTRAEKMRAILVDALICVLFPLVYIALQYIVQGHRFNILENIGCYPAVTNTPVTYVVSYVWPVLLGLISATYGVMALLQFNKHRLQFSQFLHTHSTLSASRYLRLMALALTEMMCTMPLGIFVIVLNSKTENIQPWVSLAVTHYGFGRIDQVPAIVWRSQHLIVVCNELTRWCAPVSAFIFFFYFGFAEEARRNYAAAWRRVCRALGLPERVPSLPTTKKPFSSSDNKGSGFAEKFAAKAKGFSNFNVKDFTSEFTSKAHDFTSKAKQYTLPRPMPQTLSSSGFSSSDSTRFGSSVDGKELPSPTTKEFSSPIPIHLSGMQTLASFDSNKDLPSPPAYDIEAQYGPYNIDNRVSYHIADTGVRASYPMGVAYSSDSEHRRIVPHHSTVPHHSTADEPASPALPDTPSSCSSSATFSTLQSRDFIVLPSSADVTRRDSGSSAGGVASTSRPTRAGPPRLPSLSQLFGISSMRGQEGDVEAQGEEMAADVDVSEMVLDTLAPASIIAATTTAGAPATTTPDRGEPDVPTSPRTHRASV.

Helical transmembrane passes span 8–28 (LFPI…PWHL), 37–57 (FFMM…VAWA), 70–90 (ISIR…LCII), 113–133 (ILVD…LQYI), 163–183 (VWPV…LLQF), 209–229 (MALA…VIVL), and 272–292 (LTRW…GFAE). 4 disordered regions span residues 375–416 (PRPM…SSPI), 490–516 (TVPH…SSSA), 532–563 (SADV…RLPS), and 611–639 (TTAG…RASV). Positions 383 to 398 (SSSGFSSSDSTRFGSS) are enriched in low complexity. Low complexity-rich tracts occupy residues 541 to 551 (GSSAGGVASTS) and 611 to 621 (TTAGAPATTTP).

It belongs to the G-protein coupled receptor 4 family.

Its subcellular location is the membrane. Receptor for the BAP1 pheromone, a prenylated mating factor. Has a role in the initiation of B-regulated nuclear migration. This is Pheromone B alpha 1 receptor (BAR1) from Schizophyllum commune (Split gill fungus).